Consider the following 81-residue polypeptide: Toxin-like peptide AaF1CA5 (81 aa).

The N-terminal stretch at 1 to 22 is a signal peptide; the sequence is MMKLMLFSIIVILFSLIGSIHG. One can recognise an LCN-type CS-alpha/beta domain in the interval 25–81; the sequence is VPGNYPLDSSDDTYLCAPLGENPFCIKICRKHGVKYGLMLRLPCWCEYFGKIKNVKI. Intrachain disulfides connect Cys49–Cys68 and Cys53–Cys70.

It belongs to the long (3 C-C) scorpion toxin superfamily. As to expression, expressed by the venom gland.

The protein resides in the secreted. Probable neurotoxin that inhibits ion channels. The chain is Toxin-like peptide AaF1CA5 from Androctonus australis (Sahara scorpion).